The sequence spans 540 residues: CTP synthase (540 aa).

Positions 1–265 are amidoligase domain; the sequence is MVRFIFITGG…DNKVLKFFNL (265 aa). Ser13 contacts CTP. Position 13 (Ser13) interacts with UTP. ATP-binding positions include 14–19 and Asp71; that span reads SLGKGL. Mg(2+)-binding residues include Asp71 and Glu139. CTP is bound by residues 146–148, 186–191, and Lys222; these read DIE and KTKPTQ. UTP is bound by residues 186 to 191 and Lys222; that span reads KTKPTQ. Residues 290–539 enclose the Glutamine amidotransferase type-1 domain; sequence RIAIIAKYHK…VEAAIKYNKN (250 aa). L-glutamine is bound at residue Gly352. Cys379 functions as the Nucleophile; for glutamine hydrolysis in the catalytic mechanism. L-glutamine is bound by residues 380–383, Glu403, and Arg467; that span reads LGMQ. Active-site residues include His512 and Glu514.

It belongs to the CTP synthase family. In terms of assembly, homotetramer.

The enzyme catalyses UTP + L-glutamine + ATP + H2O = CTP + L-glutamate + ADP + phosphate + 2 H(+). The catalysed reaction is L-glutamine + H2O = L-glutamate + NH4(+). It carries out the reaction UTP + NH4(+) + ATP = CTP + ADP + phosphate + 2 H(+). It functions in the pathway pyrimidine metabolism; CTP biosynthesis via de novo pathway; CTP from UDP: step 2/2. With respect to regulation, allosterically activated by GTP, when glutamine is the substrate; GTP has no effect on the reaction when ammonia is the substrate. The allosteric effector GTP functions by stabilizing the protein conformation that binds the tetrahedral intermediate(s) formed during glutamine hydrolysis. Inhibited by the product CTP, via allosteric rather than competitive inhibition. In terms of biological role, catalyzes the ATP-dependent amination of UTP to CTP with either L-glutamine or ammonia as the source of nitrogen. Regulates intracellular CTP levels through interactions with the four ribonucleotide triphosphates. The protein is CTP synthase of Rickettsia bellii (strain RML369-C).